The primary structure comprises 515 residues: Glucose-6-phosphate 1-dehydrogenase (515 aa).

Ala-2 carries the post-translational modification N-acetylalanine. Ser-8 carries the post-translational modification Phosphoserine. The residue at position 10 (Thr-10) is a Phosphothreonine. At Phe-26 the chain carries Phosphoserine. NADP(+)-binding positions include 38-45 and Arg-72; that span reads GASGDLAK. Lys-89 carries the post-translational modification N6-acetyllysine. Positions 147 and 171 each coordinate NADP(+). Residues Lys-171, 201–205, Glu-239, and Asp-258 each bind D-glucose 6-phosphate; that span reads HYLGK. Lys-171 is modified (N6-(2-hydroxyisobutyryl)lysine; alternate). Lys-171 is subject to N6-acetyllysine; alternate. The Proton acceptor role is filled by His-263. Arg-357 is a binding site for NADP(+). Residues Lys-360 and Arg-365 each coordinate D-glucose 6-phosphate. Lys-366, Arg-370, and Arg-393 together coordinate NADP(+). Gln-395 serves as a coordination point for D-glucose 6-phosphate. NADP(+)-binding positions include 401 to 403 and 421 to 423; these read YTK and DLT. Lys-403 carries the N6-acetyllysine modification. Residue Lys-432 is modified to N6-acetyllysine. Arg-487 is an NADP(+) binding site. The residue at position 497 (Lys-497) is an N6-acetyllysine. NADP(+) contacts are provided by Tyr-503 and Trp-509. Phosphotyrosine is present on Tyr-503.

It belongs to the glucose-6-phosphate dehydrogenase family. Homotetramer; dimer of dimers. Interacts with SIRT2; the interaction is enhanced by H(2)O(2) treatment. Forms a ternary complex with ALDOB and TP53; this interaction is direct. ALDOB stabilizes the complex inhibiting G6PD activity and keeping oxidative pentose phosphate metabolism in check. Acetylated by ELP3 at Lys-403; acetylation inhibits its homodimerization and enzyme activity. Deacetylated by SIRT2 at Lys-403; deacetylation stimulates its enzyme activity. In terms of tissue distribution, isoform Long is found in lymphoblasts, granulocytes and sperm.

The protein localises to the cytoplasm. The protein resides in the cytosol. Its subcellular location is the membrane. It catalyses the reaction D-glucose 6-phosphate + NADP(+) = 6-phospho-D-glucono-1,5-lactone + NADPH + H(+). Its pathway is carbohydrate degradation; pentose phosphate pathway; D-ribulose 5-phosphate from D-glucose 6-phosphate (oxidative stage): step 1/3. In terms of biological role, catalyzes the rate-limiting step of the oxidative pentose-phosphate pathway, which represents a route for the dissimilation of carbohydrates besides glycolysis. The main function of this enzyme is to provide reducing power (NADPH) and pentose phosphates for fatty acid and nucleic acid synthesis. In Homo sapiens (Human), this protein is Glucose-6-phosphate 1-dehydrogenase (G6PD).